The sequence spans 103 residues: Small ribosomal subunit protein uS10 (103 aa).

It belongs to the universal ribosomal protein uS10 family. As to quaternary structure, part of the 30S ribosomal subunit.

In terms of biological role, involved in the binding of tRNA to the ribosomes. This chain is Small ribosomal subunit protein uS10, found in Escherichia coli O127:H6 (strain E2348/69 / EPEC).